Here is a 462-residue protein sequence, read N- to C-terminus: Retinoic acid receptor alpha (462 aa).

Residues 1 to 87 (MASNSSSCPT…PPPLPRIYKP (87 aa)) form a modulating region. The segment covering 52-64 (GYSTPSPATIETQ) has biased composition (polar residues). The disordered stretch occupies residues 52–77 (GYSTPSPATIETQSSSSEEIVPSPPS). A Phosphoserine; by CDK7 modification is found at Ser-77. 2 NR C4-type zinc fingers span residues 88 to 108 (CFVC…CEGC) and 124 to 148 (CHRD…LQKC). The segment at residues 88–153 (CFVCQDKSSG…RLQKCFDVGM (66 aa)) is a DNA-binding region (nuclear receptor). Ser-96 is subject to Phosphoserine; by PKB/AKT1. Residues 154–182 (SKESVRNDRNKKKKEAPKPECSESYTLTP) are hinge. Residues Lys-166 and Lys-171 each participate in a glycyl lysine isopeptide (Lys-Gly) (interchain with G-Cter in SUMO) cross-link. The NR LBD domain maps to 183–417 (EVGELIEKVR…PLIQEMLENS (235 aa)). At Ser-219 the chain carries Phosphoserine; by PKA. Cys-235 contacts all-trans-retinoate. Residues 254–258 (IADQI) carry the UBR5-degron motif. An all-trans-retinoate-binding site is contributed by Ser-287. The residue at position 347 (Lys-347) is an N6,N6,N6-trimethyllysine. At Ser-369 the chain carries Phosphoserine; by PKA and RPS6KA5. Lys-399 participates in a covalent cross-link: Glycyl lysine isopeptide (Lys-Gly) (interchain with G-Cter in SUMO). The segment at 404-419 (GSMPPLIQEMLENSEG) is required for binding corepressor NCOR1. The 9aaTAD motif lies at 408-416 (PLIQEMLEN). The interval 420-462 (LDTLSGQSGGGTRDGGGLAPPPGSCSPSLSPSSHRSSPATQSP) is disordered. Gly residues predominate over residues 426 to 437 (QSGGGTRDGGGL). Low complexity predominate over residues 444–462 (CSPSLSPSSHRSSPATQSP).

It belongs to the nuclear hormone receptor family. NR1 subfamily. In terms of assembly, heterodimer; with RXRA. Binds DNA preferentially as a heterodimer. RXRA serves as enhancer to induce RARA binding to RARE. Interacts with RXRG. Interacts with NCOA3 and NCOA6 coactivators, leading to a strong increase of transcription of target genes. Interacts with NCOA7; the interaction requires ligand-binding. Interacts (via the ligand-binding domain) with PRAME; interaction is direct and ligand (retinoic acid)-dependent. Interacts with PRKAR1A; the interaction negatively regulates RARA transcriptional activity. Interacts with NCOR1; the interaction occurs in the absence of ligand and represses transcriptional activity. Interacts with NCOR2. Interacts with PRMT2. Interacts with LRIF1. Interacts with ASXL1 and NCOA1. Interacts with ACTN4. Interacts with CDK7; the interaction is enhanced by interaction with GTF2H3. Interacts with GTF2H3; the interaction requires prior phosphorylation on Ser-369 which then enhances interaction with CDK7. In a complex with HDAC3, HDAC5 and HDAC7; the HDACs serve as corepressors of RARA, causing its deacetylation and inhibition of RARE DNA element binding; association with HDAC3, HDAC5 and HDAC7 is increased upon oscillatory shear stress. In the absence of hormonal ligand, interacts with TACC1. In terms of processing, phosphorylated on serine and threonine residues. Phosphorylation does not change during cell cycle. Phosphorylation on Ser-77 is crucial for the N-terminal AF1 transcriptional activity. Under stress conditions, MAPK8 enhances phosphorylation on Thr-181, Ser-445 and Ser-461 leading to RARA ubiquitination and degradation. Phosphorylation by AKT1 inhibits the transactivation activity. On retinoic acid stimulation, phosphorylation on Ser-369 by RPS6KA5 promotes interaction with GTF2H3 and the CDK7-mediated phosphorylation of Ser-77. Ubiquitinated by UBR5, leading to its degradation: UBR5 specifically recognizes and binds ligand-bound RARA when it is not associated with coactivators (NCOAs). In presence of NCOAs, the UBR5-degron is not accessible, preventing its ubiquitination and degradation. Post-translationally, sumoylated with SUMO2, mainly on Lys-399 which is also required for SENP6 binding. On all-trans retinoic acid (ATRA) binding, a conformational change may occur that allows sumoylation on two additional site, Lys-166 and Lys-171. Probably desumoylated by SENP6. Sumoylation levels determine nuclear localization and regulate ATRA-mediated transcriptional activity. In terms of processing, acetylated; acetylation is increased upon pulsatile shear stress and decreased upon oscillatory shear stress. Expressed in Sertoli cells and germ cells.

Its subcellular location is the nucleus. The protein resides in the cytoplasm. In terms of biological role, receptor for retinoic acid. Retinoic acid receptors bind as heterodimers to their target response elements in response to their ligands, all-trans or 9-cis retinoic acid, and regulate gene expression in various biological processes. The RXR/RAR heterodimers bind to the retinoic acid response elements (RARE) composed of tandem 5'-AGGTCA-3' sites known as DR1-DR5. In the absence of ligand, the RXR-RAR heterodimers associate with a multiprotein complex containing transcription corepressors that induce histone deacetylation, chromatin condensation and transcriptional suppression. On ligand binding, the corepressors dissociate from the receptors and associate with the coactivators leading to transcriptional activation. Formation of heterocomplex with histone deacetylases might lead to inhibition of RARE DNA element binding and to transcriptional repression. Transcriptional activation and RARE DNA element binding might be supported by the transcription factor KLF2. RARA plays an essential role in the regulation of retinoic acid-induced germ cell development during spermatogenesis. Has a role in the survival of early spermatocytes at the beginning prophase of meiosis. In Sertoli cells, may promote the survival and development of early meiotic prophase spermatocytes. In concert with RARG, required for skeletal growth, matrix homeostasis and growth plate function. Together with RXRA, positively regulates microRNA-10a expression, thereby inhibiting the GATA6/VCAM1 signaling response to pulsatile shear stress in vascular endothelial cells. In association with HDAC3, HDAC5 and HDAC7 corepressors, plays a role in the repression of microRNA-10a and thereby promotes the inflammatory response. The polypeptide is Retinoic acid receptor alpha (Rara) (Mus musculus (Mouse)).